A 68-amino-acid polypeptide reads, in one-letter code: Medusin-AS (68 aa).

The first 22 residues, 1-22, serve as a signal peptide directing secretion; the sequence is MAFLKKSLFLVLFLGLVSLSVC. Residues 23–49 constitute a propeptide that is removed on maturation; sequence EEEKRESEEEKNEQEEDDRDERSEEKR. Residues 24 to 46 are disordered; it reads EEKRESEEEKNEQEEDDRDERSE. Acidic residues predominate over residues 31 to 41; that stretch reads EEKNEQEEDDR. L67 carries the leucine amide modification.

It belongs to the frog skin active peptide (FSAP) family. Medusin subfamily. As to expression, expressed by the skin glands.

The protein resides in the secreted. Its function is as follows. Antimicrobial peptide active against Gram-positive bacteria and fungi but inactive against Gram-negative bacteria. Also inhibits growth of B.dendrobatidis zoospores at high concentrations. Shows anticancer activities. Shows hemolytic activity. This is Medusin-AS from Agalychnis spurrelli (Gliding leaf frog).